The sequence spans 148 residues: Ubiquitin-conjugating enzyme E2 8 (148 aa).

A UBC core domain is found at Met-1–Met-147. Catalysis depends on Cys-85, which acts as the Glycyl thioester intermediate.

The protein belongs to the ubiquitin-conjugating enzyme family. Interacts with CIP8, CHIP, NLA and XERICO. Highest expression in young stems, old leaves. Lowest levels in floral buds, anthers and young leaves.

It carries out the reaction S-ubiquitinyl-[E1 ubiquitin-activating enzyme]-L-cysteine + [E2 ubiquitin-conjugating enzyme]-L-cysteine = [E1 ubiquitin-activating enzyme]-L-cysteine + S-ubiquitinyl-[E2 ubiquitin-conjugating enzyme]-L-cysteine.. It functions in the pathway protein modification; protein ubiquitination. Its function is as follows. Accepts the ubiquitin from the E1 complex and catalyzes its covalent attachment to other proteins. Mediates the selective degradation of short-lived and abnormal proteins. The chain is Ubiquitin-conjugating enzyme E2 8 (UBC8) from Arabidopsis thaliana (Mouse-ear cress).